We begin with the raw amino-acid sequence, 967 residues long: Probable serine/threonine-protein kinase DDB_G0290621 (967 aa).

Disordered stretches follow at residues 65–122 (EDSD…KEKE), 215–251 (SSLS…SSSS), and 287–326 (QQQL…SPRT). Acidic residues predominate over residues 66 to 94 (DSDEDDDDEEDEEDEEDSDEEEDDDVVED). The segment covering 95-122 (DNTKDIGKSRDSDKSIKGKEKGKEKEKE) has biased composition (basic and acidic residues). A compositionally biased stretch (low complexity) spans 297–326 (QQQQQQQQQQQQQNNSMLQQSNNNNISPRT). The Protein kinase domain occupies 345–610 (FNDSNKIGEG…EIRSRLSEII (266 aa)). Residues 351–359 (IGEGGQCSI) and K368 each bind ATP. The active-site Proton acceptor is D467. Disordered stretches follow at residues 634 to 667 (DDSL…NNNN), 700 to 752 (STSN…NNNI), and 862 to 882 (TSSS…NPSN). Residues 639-666 (NNNNNNNQNNNNQNNNNNNNNNNNNNNN) are compositionally biased toward low complexity. Positions 863 to 882 (SSSSNKNNNNNNNDNNNPSN) are enriched in low complexity.

This sequence belongs to the protein kinase superfamily. TKL Ser/Thr protein kinase family.

It catalyses the reaction L-seryl-[protein] + ATP = O-phospho-L-seryl-[protein] + ADP + H(+). The catalysed reaction is L-threonyl-[protein] + ATP = O-phospho-L-threonyl-[protein] + ADP + H(+). The sequence is that of Probable serine/threonine-protein kinase DDB_G0290621 from Dictyostelium discoideum (Social amoeba).